The following is a 194-amino-acid chain: Peptidyl-tRNA hydrolase (194 aa).

Position 17 (Tyr-17) interacts with tRNA. Residue His-22 is the Proton acceptor of the active site. TRNA contacts are provided by Tyr-68, Asn-70, and Asn-116.

This sequence belongs to the PTH family. As to quaternary structure, monomer.

Its subcellular location is the cytoplasm. It carries out the reaction an N-acyl-L-alpha-aminoacyl-tRNA + H2O = an N-acyl-L-amino acid + a tRNA + H(+). Hydrolyzes ribosome-free peptidyl-tRNAs (with 1 or more amino acids incorporated), which drop off the ribosome during protein synthesis, or as a result of ribosome stalling. Functionally, catalyzes the release of premature peptidyl moieties from peptidyl-tRNA molecules trapped in stalled 50S ribosomal subunits, and thus maintains levels of free tRNAs and 50S ribosomes. The polypeptide is Peptidyl-tRNA hydrolase (Pseudomonas entomophila (strain L48)).